Here is an 87-residue protein sequence, read N- to C-terminus: Toxin Cll3 (87 aa).

An N-terminal signal peptide occupies residues Met-1–Ala-19. The LCN-type CS-alpha/beta domain occupies Lys-20 to Tyr-85. Intrachain disulfides connect Cys-31–Cys-84, Cys-35–Cys-60, Cys-44–Cys-65, and Cys-48–Cys-67. The residue at position 85 (Tyr-85) is a Tyrosine amide.

This sequence belongs to the long (4 C-C) scorpion toxin superfamily. Sodium channel inhibitor family. Beta subfamily. Expressed by the venom gland.

Its subcellular location is the secreted. Functionally, beta toxins bind voltage-independently at site-4 of sodium channels (Nav) and shift the voltage of activation toward more negative potentials thereby affecting sodium channel activation and promoting spontaneous and repetitive firing. This Centruroides limpidus (Mexican scorpion) protein is Toxin Cll3.